The primary structure comprises 122 residues: Small ribosomal subunit protein uS13 (122 aa).

Positions 93–122 are disordered; it reads RRGLPVRGQKTKTNARTRKGPKKTMANKKK.

It belongs to the universal ribosomal protein uS13 family. As to quaternary structure, part of the 30S ribosomal subunit. Forms a loose heterodimer with protein S19. Forms two bridges to the 50S subunit in the 70S ribosome.

Located at the top of the head of the 30S subunit, it contacts several helices of the 16S rRNA. In the 70S ribosome it contacts the 23S rRNA (bridge B1a) and protein L5 of the 50S subunit (bridge B1b), connecting the 2 subunits; these bridges are implicated in subunit movement. Contacts the tRNAs in the A and P-sites. The sequence is that of Small ribosomal subunit protein uS13 from Clostridium botulinum (strain Alaska E43 / Type E3).